We begin with the raw amino-acid sequence, 291 residues long: 4-diphosphocytidyl-2-C-methyl-D-erythritol kinase (291 aa).

K11 is an active-site residue. Residue 94–104 (PAGSGLGGGSA) participates in ATP binding. D136 is an active-site residue.

The protein belongs to the GHMP kinase family. IspE subfamily.

It catalyses the reaction 4-CDP-2-C-methyl-D-erythritol + ATP = 4-CDP-2-C-methyl-D-erythritol 2-phosphate + ADP + H(+). It participates in isoprenoid biosynthesis; isopentenyl diphosphate biosynthesis via DXP pathway; isopentenyl diphosphate from 1-deoxy-D-xylulose 5-phosphate: step 3/6. Functionally, catalyzes the phosphorylation of the position 2 hydroxy group of 4-diphosphocytidyl-2C-methyl-D-erythritol. This Treponema pallidum (strain Nichols) protein is 4-diphosphocytidyl-2-C-methyl-D-erythritol kinase.